Here is a 193-residue protein sequence, read N- to C-terminus: Nucleoside triphosphate pyrophosphatase (193 aa).

The Proton acceptor role is filled by Asp-70.

This sequence belongs to the Maf family. Requires a divalent metal cation as cofactor.

The protein resides in the cytoplasm. The catalysed reaction is a ribonucleoside 5'-triphosphate + H2O = a ribonucleoside 5'-phosphate + diphosphate + H(+). It catalyses the reaction a 2'-deoxyribonucleoside 5'-triphosphate + H2O = a 2'-deoxyribonucleoside 5'-phosphate + diphosphate + H(+). Its function is as follows. Nucleoside triphosphate pyrophosphatase. May have a dual role in cell division arrest and in preventing the incorporation of modified nucleotides into cellular nucleic acids. This Anaplasma phagocytophilum (strain HZ) protein is Nucleoside triphosphate pyrophosphatase.